The following is a 365-amino-acid chain: Caffeic acid 3-O-methyltransferase (365 aa).

Asparagine 133 serves as a coordination point for (E)-ferulate. S-adenosyl-L-homocysteine-binding residues include glycine 210, aspartate 233, aspartate 253, methionine 254, methionine 266, and lysine 267. Residue histidine 271 is the Proton acceptor of the active site. (E)-5-hydroxyferulate is bound at residue aspartate 272.

The protein belongs to the class I-like SAM-binding methyltransferase superfamily. Cation-independent O-methyltransferase family. COMT subfamily. As to quaternary structure, homodimer.

It carries out the reaction (E)-caffeate + S-adenosyl-L-methionine = (E)-ferulate + S-adenosyl-L-homocysteine + H(+). It catalyses the reaction (E)-5-hydroxyferulate + S-adenosyl-L-methionine = (E)-sinapate + S-adenosyl-L-homocysteine + H(+). It functions in the pathway aromatic compound metabolism; phenylpropanoid biosynthesis. With respect to regulation, inhibited by Cu(2+), and to a lesser extent by Ni(2+), Mn(2+), Co(2+), Fe(3+) and Zn(2+). Unaffected by Fe(2+) and Mg(2+). Its function is as follows. Catalyzes the conversion of caffeic acid to ferulic acid and of 5-hydroxyferulic acid to sinapic acid. The resulting products may subsequently be converted to the corresponding alcohols that are incorporated into lignins. This is Caffeic acid 3-O-methyltransferase from Ammi majus (Bishop's weed).